The chain runs to 1205 residues: A disintegrin and metalloproteinase with thrombospondin motifs 2 (1205 aa).

The first 28 residues, 1–28, serve as a signal peptide directing secretion; sequence MDPPAGAAGRLLCPALLLLLLLPLPADA. Positions 29-253 are excised as a propeptide; it reads RLAAAAADPP…VNSSRRRMRR (225 aa). Asn-104 and Asn-245 each carry an N-linked (GlcNAc...) asparagine glycan. The region spanning 260 to 464 is the Peptidase M12B domain; that stretch reads YNIEVLLGVD…HSYDCLRDDP (205 aa). 10 cysteine pairs are disulfide-bonded: Cys-337–Cys-386, Cys-380–Cys-459, Cys-419–Cys-445, Cys-486–Cys-511, Cys-497–Cys-520, Cys-506–Cys-539, Cys-533–Cys-544, Cys-567–Cys-604, Cys-571–Cys-609, and Cys-582–Cys-594. His-402 provides a ligand contact to Zn(2+). Glu-403 is an active-site residue. Positions 406 and 412 each coordinate Zn(2+). The 81-residue stretch at 474–554 folds into the Disintegrin domain; it reads QLPGLHYSMN…IWLTPDILKR (81 aa). A TSP type-1 1 domain is found at 555 to 610; sequence DGNWGAWSPFGSCSRTCGTGVKFRTRQCDNPHPANGGRTCSGLAYDFQLCNSQDCP. A Cell attachment site motif is present at residues 685–687; it reads RGD. Residues 717 to 845 are spacer; it reads KVVKGTFSRS…NVDDNNVLED (129 aa). 3 TSP type-1 domains span residues 848 to 906, 908 to 968, and 969 to 1023; these read VGYE…NPQE, SQPV…NREL, and CPGR…GPCP. N-linked (GlcNAc...) asparagine glycans are attached at residues Asn-942, Asn-943, and Asn-987. 3 disulfides stabilise this stretch: Cys-981/Cys-1017, Cys-985/Cys-1022, and Cys-996/Cys-1006. N-linked (GlcNAc...) asparagine glycosylation occurs at Asn-1025. Residues 1053–1091 form the PLAC domain; sequence SKGRCQGDKSVFCRMEVLSRYCSIPGYNKLCCKSCNPHD. N-linked (GlcNAc...) asparagine glycans are attached at residues Asn-1092, Asn-1139, and Asn-1144. Residues 1163-1184 are disordered; the sequence is GLEDEVQPPNLIPRRPSPYEKT.

As to quaternary structure, may belong to a multimeric complex. Binds specifically to collagen type XIV. Zn(2+) is required as a cofactor. The N-terminus is blocked. In terms of processing, the precursor is cleaved by a furin endopeptidase. Post-translationally, glycosylated. Can be O-fucosylated by POFUT2 on a serine or a threonine residue found within the consensus sequence C1-X(2)-(S/T)-C2-G of the TSP type-1 repeat domains where C1 and C2 are the first and second cysteine residue of the repeat, respectively. Fucosylated repeats can then be further glycosylated by the addition of a beta-1,3-glucose residue by the glucosyltransferase, B3GALTL. Fucosylation mediates the efficient secretion of ADAMTS family members. Can also be C-glycosylated with one or two mannose molecules on tryptophan residues within the consensus sequence W-X-X-W of the TPRs, and N-glycosylated. These other glycosylations can also facilitate secretion. As to expression, enzymatic activity is detected at high level in all type I collagen-rich tissues such as skin, bones, tendons and aorta and at low level in brain and thymus. The mRNA levels were disproportionately high in heart, liver, retina and muscle.

The protein resides in the secreted. It is found in the extracellular space. Its subcellular location is the extracellular matrix. The catalysed reaction is Cleaves the N-propeptide of collagen chain alpha1(I) at Pro-|-Gln and of alpha1(II) and alpha2(I) at Ala-|-Gln.. Functionally, cleaves the propeptides of type I and II collagen prior to fibril assembly. Does not act on type III collagen. Cleaves lysyl oxidase LOX at a site downstream of its propeptide cleavage site to produce a short LOX form with reduced collagen-binding activity. The protein is A disintegrin and metalloproteinase with thrombospondin motifs 2 (ADAMTS2) of Bos taurus (Bovine).